Consider the following 453-residue polypeptide: GTPase Der (453 aa).

2 consecutive EngA-type G domains span residues 3–167 (PIIV…INSK) and 188–361 (VKIA…HTSQ). GTP-binding positions include 9-16 (GRTNVGKS), 57-61 (DTAGI), 119-122 (NKID), 194-201 (GKPNVGKS), 241-245 (DTAGM), and 306-309 (NKCD). The KH-like domain maps to 362–446 (KKIKTSQVMK…PIKIQFKETM (85 aa)).

It belongs to the TRAFAC class TrmE-Era-EngA-EngB-Septin-like GTPase superfamily. EngA (Der) GTPase family. As to quaternary structure, associates with the 50S ribosomal subunit.

GTPase that plays an essential role in the late steps of ribosome biogenesis. This is GTPase Der from Buchnera aphidicola subsp. Schizaphis graminum (strain Sg).